A 107-amino-acid chain; its full sequence is Ig kappa chain V-VI region J539 (107 aa).

Residues 1–23 (EIVLTQSPAITAASLGQKVTITC) form a framework-1 region. Cysteines 23 and 87 form a disulfide. The tract at residues 24–33 (SASSSVSSLH) is complementarity-determining-1. The interval 34–48 (WYQQKSGTSPKPWIY) is framework-2. The interval 49 to 55 (EISKLAS) is complementarity-determining-2. Positions 56 to 87 (GVPARFSGSGSGTSYSLTINTMEAEDAAIYYC) are framework-3. The tract at residues 88–96 (QQWTYPLIT) is complementarity-determining-3. The segment at 97–106 (FGAGTKLELK) is framework-4.

This Mus musculus (Mouse) protein is Ig kappa chain V-VI region J539.